The primary structure comprises 1305 residues: MNVFDEVINATVVNNSVTGHFTTTLREELIITRTNLLSVLHKDNEGRLVLAYEWKLSGRVHGLSLVPHKSGLGRLAVLTGRGRVSIVRFDAENQTLETESLHYYDAKFEELSALTVGAAPRLEQEPAARCLLVHNGDCLAVLPLRGHEEEGEEAEEEEEHPAKRARTDADGRLVGASTVMPASHLHSDIKNVKDMRFLRGLNKSAVGVLYQPQLSWCGNEKLTRQTMKFIILSLDLDDEKSTVINMLQGLPNTLHTIIPLSNGCVLAGVNELLYVDNTGALQGAISLNAFSNSGLNTRIQDNSKLQAFFEQPLCYFATQSNGRDILLLMDEKARMYNVIIEAEGRLLTTFNCVQLPIVNEIFKRNMMPTSICGNMNLETGSLFIGFQSGDAMHVRLNNLKSSLEHKGTVSETLETDEDYMELYGNNAEKEKKNLETESPFDIECLDRLLNIGPVTSLAVGKASSIEHTVAKLANPNKDELSIVATSGNGTGSHLTILENTIVPTVQQALKFISVTQIWNLKIKGKDKYLVTTDSSQTRSDIYSIDRDFKPFKAADFRKNDTTVSTAVTGGGKRIVQVTSKGVHLFDINFKRMMTMNFDFEVVHVCIKDPFLLLTNSKGDIKIYELEPKHKKKFVKTVLPDALKEIIITFGVILESNMCNKYINGLEKSEEPQLLFTFVTADNQIVFFTKDHNDRIFQLNGIDDFRQKLFISTYQLPEDINPDPSIKQVIISRLGHKHKQEYLTILTFGGEVYLYRKCIDNPDRFIKCDHELLITGAPENAYPKGVQGVERVAHYIEDYNGYSVIFITGTVPYIIIKEDNSVPRIFPFANITLVSMTRWGENSVMCVDDVKNARIMTLNLDRDRYYGNKMSLAKIYLEDPLEDFQTLNNITYHERTQTFIVSYAKSIDYVALSEEDEPLVGYNPDKIHAMGFQSGIILLSPKSWEIIDKIEYGKNSLINDMRTMMIQLNSNTKRRREYLVVGNTYVRDEDIGGTGSFYLYDITEVVPEPGKPDTNYKFKDIFQEDIRGTVSTVCEISGRFMISQSSKAMVRDIQEDNSVVPVAFLDMPVFITDAKSFGNLMIIGDSMQGFSFLGFDAEPYRMLTLGKSVSKLETMCVEFLVNNGDVYFLVTDRNNLMHVLKYAPDEPNSLSGQRLVHCTSFNLHSTNTCMRLIKKNDEFGKVSRGFGIYMPSFQCIGSQADGTIFKVVPLSEASYRSLYLIQQQLIDKEVQLCGLNPRMERLENPFYQMGHILRPMLDFTVLKRFATLSIPTRMTMASKAGRQAHAEIWRDLIDIEYSLTSLNKIT.

Residues 147 to 166 (HEEEGEEAEEEEEHPAKRAR) form a disordered region. The segment covering 149-159 (EEGEEAEEEEE) has biased composition (acidic residues).

The protein belongs to the CFT1 family.

It localises to the nucleus. In terms of biological role, RNA-binding component of the cleavage and polyadenylation factor (CPF) complex, which plays a key role in polyadenylation-dependent pre-mRNA 3'-end formation and cooperates with cleavage factors including the CFIA complex and NAB4/CFIB. Involved in poly(A) site recognition. May be involved in coupling transcription termination and mRNA 3'-end formation. The chain is Protein CFT1 (CFT1) from Eremothecium gossypii (strain ATCC 10895 / CBS 109.51 / FGSC 9923 / NRRL Y-1056) (Yeast).